The primary structure comprises 251 residues: MNLNSIPAFDDNYIWVLNDEAGRCLIVDPGDAEPVLNAIAANNWQPEAIFLTHHHHDHVGGVKELVKKFPQIVVYGPQETQDKGTTQVVKDSETAFVLGHEFSVIATPGHTLGHICYFSKPYLFCGDTLFSGGCGRLFEGTPSQMYQSIKKLSALPDDTLVCCAHEYTLSNMKFALSILPHDLSINDYYRKVKELRAKNQITLPVILKNERQINVFLRTEDIDLINVINEETLLQQPEERFAWLRSKKDRF.

Zn(2+) contacts are provided by H53, H55, D57, H58, H110, D127, and H165.

The protein belongs to the metallo-beta-lactamase superfamily. Glyoxalase II family. As to quaternary structure, monomer. It depends on Zn(2+) as a cofactor.

The enzyme catalyses an S-(2-hydroxyacyl)glutathione + H2O = a 2-hydroxy carboxylate + glutathione + H(+). It participates in secondary metabolite metabolism; methylglyoxal degradation; (R)-lactate from methylglyoxal: step 2/2. Functionally, thiolesterase that catalyzes the hydrolysis of S-D-lactoyl-glutathione to form glutathione and D-lactic acid. This chain is Hydroxyacylglutathione hydrolase, found in Escherichia coli O6:H1 (strain CFT073 / ATCC 700928 / UPEC).